The primary structure comprises 974 residues: MHQQPRSPAPAASTSSARRSQDYDRRSDSPAFDLRTHTNRGLGIETENDTAEPEQSSQPGPEAISKVNQIVTNYHTKAALIILHSRVELPPSYAKNSNVPRVNRWFNVELEETDALKDQLKTWRTCDATDNRPPPMIIETYLDTAGLTNNQTLVALDDNGKRWDVTESLAASQSSRPAKASSSRAVDVILERWRVELGDMPGKLPSDLGAILPTVYKKSIILFRSLFTYSKFLPAWKFIKRNGRSRAHPALRVKYRIFSGHARDLSKQDHLTMPLFEGDTKVVDTYSFGVTDSPAGPFSVQVTYRTCCDFRVDDSEALLSSQFMGADDEIFQPSLPSGGLDARVTPEVGSAPLTRRTVEDPDLSRAYGSLSTFHHVGPTTGASPISALRAAREARASSPSPPTSSHRNSFAAARASPVGRAATLANDTNPNVARRPSISFQPFKAPPLSASPSLVDPPLSASPRTTGAGRTSLSDSRHMPPPSVTTSSRKPPSFGPDNANSSPNSASPRPTPMSRYSSAFSHRRGRPSSGGINKLEDDNSSGRASATSSGAQPGSGLLAEITGTSSDSIHADDENISEFLKMLDLRKDLLSPSSQTAMDNHSRRMTAASAALSRFRGMKDSNAALSDSMSSSLLMNRSSATSSKQLSGVPGIAGTSISTASSPGGKAISPHTPHTPAIPSRLSSNSIVDNTTTRLHGDNGSPVEEDASDETTTERLPSTVTAIPIPTSPATIFPSTFRRSSSAANRRSSHAIDDDEIFTMRSVSLGAEEPSHTTLGALQRQQDYEPIGTNIAPLESGARSSGGDDGNVLRGPTRRGPGAHRDASLSGPTVATSPYSHHPLHQRRISHSRGRGFSGGPHSLSSGSSSIARGGLIHPYPAEREAERDANAGASHSGTEDRRGTGRGSGGGRHNLPQAAQVEEDEPLLFAMSDFGASRRSFEEGRQGNHGPDSSGNTGSSRRGSGKRGTLSGFHLWP.

Low complexity predominate over residues 1 to 18; sequence MHQQPRSPAPAASTSSAR. Disordered stretches follow at residues 1–63, 389–561, 642–749, 790–871, and 883–974; these read MHQQ…GPEA, RAAR…LAEI, SSKQ…RRSS, NIAP…ARGG, and ERDA…HLWP. The span at 19–28 shows a compositional bias: basic and acidic residues; sequence RSQDYDRRSD. Low complexity predominate over residues 403–422; that stretch reads TSSHRNSFAAARASPVGRAA. The segment covering 462-474 has biased composition (polar residues); the sequence is SPRTTGAGRTSLS. Composition is skewed to low complexity over residues 498 to 508 and 541 to 551; these read NANSSPNSASP and SGRASATSSGA. Composition is skewed to polar residues over residues 681–694 and 826–835; these read RLSS…TTTR and SGPTVATSPY. Basic residues predominate over residues 838–850; the sequence is HPLHQRRISHSRG. Low complexity-rich tracts occupy residues 856-871 and 950-974; these read GPHS…ARGG and SSGN…HLWP.

It belongs to the ATG13 family. Fungi subfamily. In terms of assembly, interacts with atg1 to form the atg1-atg13 kinase complex.

The protein resides in the cytoplasm. It localises to the preautophagosomal structure. Activates the atg1 kinase in a nutritional condition dependent manner through the TOR pathway, leading to autophagy. Also involved in cytoplasm to vacuole transport (Cvt) and more specifically in Cvt vesicle formation. Seems to play a role in the switching machinery regulating the conversion between the Cvt pathway and autophagy. Finally, atg13 is also required for glycogen storage during stationary phase. The sequence is that of Autophagy-related protein 13 (atg13) from Emericella nidulans (strain FGSC A4 / ATCC 38163 / CBS 112.46 / NRRL 194 / M139) (Aspergillus nidulans).